Here is a 457-residue protein sequence, read N- to C-terminus: Siroheme synthase (457 aa).

Residues 1–204 are precorrin-2 dehydrogenase /sirohydrochlorin ferrochelatase; that stretch reads MDHLPIFCQL…ADEKAVNATT (204 aa). NAD(+)-binding positions include 22 to 23 and 43 to 44; these read DV and LT. Position 128 is a phosphoserine (serine 128). A uroporphyrinogen-III C-methyltransferase region spans residues 216-457; that stretch reads GEVVLVGAGP…RDKLNWFSSH (242 aa). S-adenosyl-L-methionine is bound at residue proline 225. Residue aspartate 248 is the Proton acceptor of the active site. Lysine 270 (proton donor) is an active-site residue. Residues 301-303, isoleucine 306, 331-332, methionine 382, and glycine 411 contribute to the S-adenosyl-L-methionine site; these read GGD and TA.

It in the N-terminal section; belongs to the precorrin-2 dehydrogenase / sirohydrochlorin ferrochelatase family. In the C-terminal section; belongs to the precorrin methyltransferase family.

The enzyme catalyses uroporphyrinogen III + 2 S-adenosyl-L-methionine = precorrin-2 + 2 S-adenosyl-L-homocysteine + H(+). It carries out the reaction precorrin-2 + NAD(+) = sirohydrochlorin + NADH + 2 H(+). It catalyses the reaction siroheme + 2 H(+) = sirohydrochlorin + Fe(2+). It functions in the pathway cofactor biosynthesis; adenosylcobalamin biosynthesis; precorrin-2 from uroporphyrinogen III: step 1/1. Its pathway is cofactor biosynthesis; adenosylcobalamin biosynthesis; sirohydrochlorin from precorrin-2: step 1/1. The protein operates within porphyrin-containing compound metabolism; siroheme biosynthesis; precorrin-2 from uroporphyrinogen III: step 1/1. It participates in porphyrin-containing compound metabolism; siroheme biosynthesis; siroheme from sirohydrochlorin: step 1/1. It functions in the pathway porphyrin-containing compound metabolism; siroheme biosynthesis; sirohydrochlorin from precorrin-2: step 1/1. Functionally, multifunctional enzyme that catalyzes the SAM-dependent methylations of uroporphyrinogen III at position C-2 and C-7 to form precorrin-2 via precorrin-1. Then it catalyzes the NAD-dependent ring dehydrogenation of precorrin-2 to yield sirohydrochlorin. Finally, it catalyzes the ferrochelation of sirohydrochlorin to yield siroheme. The polypeptide is Siroheme synthase (Salmonella arizonae (strain ATCC BAA-731 / CDC346-86 / RSK2980)).